The following is a 474-amino-acid chain: MAKQQEAELIFIPFPIPGHILATIELAKRLISHQPSRIHTITILHWSLPFLPQSDTIAFLKSLIETESRIRLITLPDVQNPPPMELFVKASESYILEYVKKMVPLVRNALSTLLSSRDESDSVHVAGLVLDFFCVPLIDVGNEFNLPSYIFLTCSASFLGMMKYLLERNRETKPELNRSSDEETISVPGFVNSVPVKVLPPGLFTTESYEAWVEMAERFPEAKGILVNSFESLERNAFDYFDRRPDNYPPVYPIGPILCSNDRPNLDLSERDRILKWLDDQPESSVVFLCFGSLKSLAASQIKEIAQALELVGIRFLWSIRTDPKEYASPNEILPDGFMNRVMGLGLVCGWAPQVEILAHKAIGGFVSHCGWNSILESLRFGVPIATWPMYAEQQLNAFTIVKELGLALEMRLDYVSEYGEIVKADEIAGAVRSLMDGEDVPRRKLKEIAEAGKEAVMDGGSSFVAVKRFIDGL.

UDP-alpha-D-glucose contacts are provided by residues S293, 352–354 (APQ), 369–377 (HCGWNSILE), and 391–394 (YAEQ).

This sequence belongs to the UDP-glycosyltransferase family.

Possesses low quercetin 3-O-glucosyltransferase, 7-O-glucosyltransferase and 3'-O-glucosyltransferase activities in vitro. Glucosylates other secondary metabolites in vitro like vanillin, trans-resveratrol, curumin and etoposide. This is UDP-glycosyltransferase 71C2 (UGT71C2) from Arabidopsis thaliana (Mouse-ear cress).